The sequence spans 476 residues: MPPSIPVPSIVTRAIPSLARAASTTTKSTPSKEHHVHSYSPEVLPLGYAVASTHASIKKKTGALDLGILVSTTDKPASAAACLTRNVFKAAPVTVTTQLLQSGGGRARGFIVNSGCANAVTGKKGLEDAWEMSNTVTSQLPPGQRGIGTLVMSTGVIGQPLPISSIISKIPELVRSLDDSPKSWLDLSKSFMTTDTFPKLRAKSFRLGERLVRIAGIDKGAGMIAPSMGPPQPPHATLLGVIATDAAISPPALQSALNYAVDRSFNNITVDGDMSTNDSIICLANGAAGKLETQGRETAESMEEITEDGHPEEYKVFREELRSFAEELAQLVVRDGEGATKFVTIRVKNAPSYETAQAVAKSIANSSLFKTAMYGEDANWGRILCAVGYTPTAQAIIPNHVSVSFIPSANVSDPTPLRLLTNGEPEANIDEDRASVILAEEDLEVEVDLGDGHEEAKVWTCDFSHEYVTINGSYRS.

T193, K219, T237, E337, N471, and S476 together coordinate substrate. T237 (nucleophile) is an active-site residue.

This sequence belongs to the ArgJ family. As to quaternary structure, heterodimer of an alpha and a beta chain. The alpha and beta chains are autoproteolytically processed from a single precursor protein within the mitochondrion.

The protein resides in the mitochondrion matrix. The catalysed reaction is N(2)-acetyl-L-ornithine + L-glutamate = N-acetyl-L-glutamate + L-ornithine. It carries out the reaction L-glutamate + acetyl-CoA = N-acetyl-L-glutamate + CoA + H(+). It participates in amino-acid biosynthesis; L-arginine biosynthesis; L-ornithine and N-acetyl-L-glutamate from L-glutamate and N(2)-acetyl-L-ornithine (cyclic): step 1/1. Its pathway is amino-acid biosynthesis; L-arginine biosynthesis; N(2)-acetyl-L-ornithine from L-glutamate: step 1/4. In terms of biological role, catalyzes two activities which are involved in the cyclic version of arginine biosynthesis: the synthesis of acetylglutamate from glutamate and acetyl-CoA, and of ornithine by transacetylation between acetylornithine and glutamate. This chain is Arginine biosynthesis bifunctional protein ArgJ, mitochondrial, found in Cryptococcus neoformans var. neoformans serotype D (strain JEC21 / ATCC MYA-565) (Filobasidiella neoformans).